A 153-amino-acid polypeptide reads, in one-letter code: Small ribosomal subunit protein bS16 (153 aa).

The disordered stretch occupies residues 130–153 (EAEAAAAAEEAPAEEAAEEAPAEA). The span at 140–153 (APAEEAAEEAPAEA) shows a compositional bias: acidic residues.

Belongs to the bacterial ribosomal protein bS16 family.

The chain is Small ribosomal subunit protein bS16 from Bifidobacterium longum (strain NCC 2705).